The sequence spans 201 residues: Superoxide dismutase [Mn] (201 aa).

4 residues coordinate Mn(2+): His-27, His-81, Asp-163, and His-167.

The protein belongs to the iron/manganese superoxide dismutase family. As to quaternary structure, homodimer. Mn(2+) serves as cofactor.

It is found in the secreted. The enzyme catalyses 2 superoxide + 2 H(+) = H2O2 + O2. Destroys superoxide anion radicals which are normally produced within the cells and which are toxic to biological systems. This chain is Superoxide dismutase [Mn] (sodA), found in Streptococcus pyogenes.